The chain runs to 147 residues: Protein YjdN (147 aa).

The chain is Protein YjdN (yjdN) from Escherichia coli (strain K12).